The chain runs to 156 residues: Small ribosomal subunit protein uS7 (156 aa).

The protein belongs to the universal ribosomal protein uS7 family. Part of the 30S ribosomal subunit. Contacts proteins S9 and S11.

In terms of biological role, one of the primary rRNA binding proteins, it binds directly to 16S rRNA where it nucleates assembly of the head domain of the 30S subunit. Is located at the subunit interface close to the decoding center, probably blocks exit of the E-site tRNA. In Shewanella loihica (strain ATCC BAA-1088 / PV-4), this protein is Small ribosomal subunit protein uS7.